Consider the following 43-residue polypeptide: Potassium channel toxin gamma-KTx 4.2 (43 aa).

Disulfide bonds link Cys-5/Cys-23, Cys-11/Cys-34, Cys-20/Cys-39, and Cys-24/Cys-41.

This sequence belongs to the ergtoxin family. Gamma-KTx 4 subfamily. Expressed by the venom gland.

Its subcellular location is the secreted. Reversibly blocks Kv11/ERG potassium channels. This chain is Potassium channel toxin gamma-KTx 4.2, found in Centruroides noxius (Mexican scorpion).